Consider the following 296-residue polypeptide: Bifunctional protein FolD (296 aa).

Residues 166-168 (GRS), S191, and I232 each bind NADP(+).

The protein belongs to the tetrahydrofolate dehydrogenase/cyclohydrolase family. In terms of assembly, homodimer.

It catalyses the reaction (6R)-5,10-methylene-5,6,7,8-tetrahydrofolate + NADP(+) = (6R)-5,10-methenyltetrahydrofolate + NADPH. It carries out the reaction (6R)-5,10-methenyltetrahydrofolate + H2O = (6R)-10-formyltetrahydrofolate + H(+). The protein operates within one-carbon metabolism; tetrahydrofolate interconversion. In terms of biological role, catalyzes the oxidation of 5,10-methylenetetrahydrofolate to 5,10-methenyltetrahydrofolate and then the hydrolysis of 5,10-methenyltetrahydrofolate to 10-formyltetrahydrofolate. This Cereibacter sphaeroides (strain ATCC 17023 / DSM 158 / JCM 6121 / CCUG 31486 / LMG 2827 / NBRC 12203 / NCIMB 8253 / ATH 2.4.1.) (Rhodobacter sphaeroides) protein is Bifunctional protein FolD.